The chain runs to 399 residues: Nicotinate phosphoribosyltransferase (399 aa).

Histidine 217 is subject to Phosphohistidine; by autocatalysis.

It belongs to the NAPRTase family. Transiently phosphorylated on a His residue during the reaction cycle. Phosphorylation strongly increases the affinity for substrates and increases the rate of nicotinate D-ribonucleotide production. Dephosphorylation regenerates the low-affinity form of the enzyme, leading to product release.

It catalyses the reaction nicotinate + 5-phospho-alpha-D-ribose 1-diphosphate + ATP + H2O = nicotinate beta-D-ribonucleotide + ADP + phosphate + diphosphate. The protein operates within cofactor biosynthesis; NAD(+) biosynthesis; nicotinate D-ribonucleotide from nicotinate: step 1/1. In terms of biological role, catalyzes the synthesis of beta-nicotinate D-ribonucleotide from nicotinate and 5-phospho-D-ribose 1-phosphate at the expense of ATP. This is Nicotinate phosphoribosyltransferase from Burkholderia cenocepacia (strain HI2424).